A 413-amino-acid chain; its full sequence is Alpha-1-antitrypsin-like protein CM55-SI (413 aa).

A signal peptide spans 1–24 (MPSSISWGLLLLAALSCLGPGSLA). At Q25 the chain carries Pyrrolidone carboxylic acid. 4 N-linked (GlcNAc...) asparagine glycosylation sites follow: N65, N102, N165, and N266. Residues 368 to 387 (GGTVLGNIRSILRYEVIFDR) are RCL.

Belongs to the serpin family. In terms of tissue distribution, expressed in liver.

The chain is Alpha-1-antitrypsin-like protein CM55-SI from Tamias sibiricus (Siberian chipmunk).